Reading from the N-terminus, the 232-residue chain is MTVQQRRRLPIASRETLQALLSEGAQALGVALSDAQRGALLDYVALLAKWNAVYNLTAIRDPRQMLIQHILDSLSIVPHLGAHGAAAAALDVGSGGGLPGVVLAIALPGWRVTLNDIVHKKSAFQNQAKAELKLGNLSVVTGRVETLRSGADVPAKFDVIVSRAFADLADFVTLARHLVAPGGSIWAMKGVRPDEEIGRLPDGACVKQMIRLTVPSLDAERHLIEVELDEAI.

Residues Gly93, Leu98, 144–145 (VE), and Arg163 each bind S-adenosyl-L-methionine.

The protein belongs to the methyltransferase superfamily. RNA methyltransferase RsmG family.

It localises to the cytoplasm. It carries out the reaction guanosine(527) in 16S rRNA + S-adenosyl-L-methionine = N(7)-methylguanosine(527) in 16S rRNA + S-adenosyl-L-homocysteine. In terms of biological role, specifically methylates the N7 position of guanine in position 527 of 16S rRNA. This chain is Ribosomal RNA small subunit methyltransferase G, found in Burkholderia pseudomallei (strain 668).